The primary structure comprises 96 residues: Co-chaperonin GroES (96 aa).

This sequence belongs to the GroES chaperonin family. As to quaternary structure, heptamer of 7 subunits arranged in a ring. Interacts with the chaperonin GroEL.

Its subcellular location is the cytoplasm. In terms of biological role, together with the chaperonin GroEL, plays an essential role in assisting protein folding. The GroEL-GroES system forms a nano-cage that allows encapsulation of the non-native substrate proteins and provides a physical environment optimized to promote and accelerate protein folding. GroES binds to the apical surface of the GroEL ring, thereby capping the opening of the GroEL channel. The chain is Co-chaperonin GroES from Haemophilus influenzae (strain 86-028NP).